A 366-amino-acid chain; its full sequence is Rab9 effector protein with kelch motifs (366 aa).

6 Kelch repeats span residues 49 to 95, 100 to 146, 151 to 200, 204 to 253, 254 to 303, and 343 to 366; these read KILI…FISA, NIWV…TSSA, KLYV…VLTA, KLFV…AWKS, YIYI…LLPW, and LCFI…TILQ.

Rab9 effector required for endosome to trans-Golgi network (TGN) transport. This Xenopus laevis (African clawed frog) protein is Rab9 effector protein with kelch motifs (rabepk).